An 82-amino-acid chain; its full sequence is uncharacterized protein (82 aa).

The span at 1-11 (MKARGSRENAS) shows a compositional bias: basic and acidic residues. The interval 1-25 (MKARGSRENASKRRPSQTQYDTHLR) is disordered. The segment covering 16-25 (SQTQYDTHLR) has biased composition (polar residues).

This is an uncharacterized protein from Human cytomegalovirus (strain AD169) (HHV-5).